Consider the following 281-residue polypeptide: Ribulose-5-phosphate-3-epimerase, chloroplastic (281 aa).

A chloroplast-targeting transit peptide spans 1-45 (MSTSAASLCCSSTQVNGFGLRPERSLLYQPTSFSFSRRRTHGIVK). Ser-63 is a binding site for substrate. The a divalent metal cation site is built by His-88, Asp-90, and His-121. Asp-90 acts as the Proton acceptor in catalysis. Substrate contacts are provided by residues His-121, 199 to 202 (GFGG), 232 to 234 (DGG), and 254 to 256 (GSA). Asp-232 is an a divalent metal cation binding site. Asp-232 acts as the Proton donor in catalysis.

The protein belongs to the ribulose-phosphate 3-epimerase family. In terms of assembly, homooctamer. Requires Co(2+) as cofactor. It depends on Fe(2+) as a cofactor. Mn(2+) serves as cofactor. Zn(2+) is required as a cofactor. In terms of tissue distribution, present in roots, seeds and flowers. Accumulates in nematode feeding sites (NFS).

It is found in the plastid. The protein localises to the chloroplast thylakoid membrane. It carries out the reaction D-ribulose 5-phosphate = D-xylulose 5-phosphate. The protein operates within carbohydrate biosynthesis; Calvin cycle. Essential protein required during embryogenesis. Catalyzes the reversible epimerization of D-ribulose 5-phosphate to D-xylulose 5-phosphate. Essential for the early steps of nematode feeding sites (NFS, multinucleated root cells) formation induced by the root-knot nematodes Heterodera schachtii, Meloidogyne incognita, M.javanica and M.hapla. This Arabidopsis thaliana (Mouse-ear cress) protein is Ribulose-5-phosphate-3-epimerase, chloroplastic.